Consider the following 157-residue polypeptide: Capsid protein (157 aa).

An N-acetylserine; by host modification is found at Ser2.

It belongs to the virgaviridae capsid protein family.

The protein resides in the virion. In terms of biological role, capsid protein self-assembles to form rod-shaped virions about 18 nm in diameter with a central canal enclosing the viral genomic RNA. In Ribgrass mosaic virus (RMV), this protein is Capsid protein (CP).